A 303-amino-acid polypeptide reads, in one-letter code: Diaminopimelate epimerase (303 aa).

Residues asparagine 15, glutamine 47, and asparagine 67 each coordinate substrate. Residue cysteine 76 is the Proton donor of the active site. Substrate is bound by residues 77–78 (GN), asparagine 163, asparagine 197, and 215–216 (ER). Cysteine 224 functions as the Proton acceptor in the catalytic mechanism. 225–226 (GS) contacts substrate. A disordered region spans residues 278–303 (FDPATGEWSRDTQGLQGSGNADRGAA).

Belongs to the diaminopimelate epimerase family. Homodimer.

It localises to the cytoplasm. It catalyses the reaction (2S,6S)-2,6-diaminopimelate = meso-2,6-diaminopimelate. It participates in amino-acid biosynthesis; L-lysine biosynthesis via DAP pathway; DL-2,6-diaminopimelate from LL-2,6-diaminopimelate: step 1/1. Functionally, catalyzes the stereoinversion of LL-2,6-diaminopimelate (L,L-DAP) to meso-diaminopimelate (meso-DAP), a precursor of L-lysine and an essential component of the bacterial peptidoglycan. This chain is Diaminopimelate epimerase, found in Brucella abortus (strain S19).